Here is a 530-residue protein sequence, read N- to C-terminus: Amidase FVEG_08295 (530 aa).

Active-site charge relay system residues include Lys-138 and Ser-214. Substrate is bound by residues Ser-214 and 235-238; that span reads IAGS. Ser-238 (acyl-ester intermediate) is an active-site residue.

It belongs to the amidase family.

It catalyses the reaction a monocarboxylic acid amide + H2O = a monocarboxylate + NH4(+). The protein operates within xenobiotic degradation. Its function is as follows. Amidase; part of the Fusarium detoxification of benzoxazolinone cluster 1 (FDB1) involved in the degradation of benzoxazolinones produced by the host plant. Maize, wheat, and rye produce the 2 benzoxazinone phytoanticipins 2,4-dihy-droxy-7-methoxy-1,4-benzoxazin-3-one (DIMBOA) and 2,4-dihydroxy-1,4-benzoxazin-3-one (DIBOA) that, due to their inherent instability once released, spontaneously degrade to the more stable corresponding benzoxazolinones, 6-methoxy-2-benzoxazolinone (MBOA) and 2-benzoxazolinone (BOA), respectively. The first step in the detoxification of benzoxazolinones involves the hydrolysis of the cyclic ester bond of benzoxazolinones by the FDB1 cluster gamma-lactamase MBL1 to aminophenols. MBL1 is able to convert BOA into 2-aminophenol (2-AP), as well as MBOA into 5-methoxy-2-aminophenol (2-AMP). The FDB2 cluster N-malonyltransferase FDB2/NAT1 then metabolizes aminophenols via N-malonylation to non-toxic malonamic acids. FDB2/NAT1 converts 2-AP into N-(2-hydroxyphenyl) malonamic acid (HPMA) and 2-AMP into N-(2-hydroxy-4-methoxyphenyl) malonamic acid (HMPMA). The duplicated dienlactone hydrolases DLH1 and DLH2 may provide redundant function for hydrolyzing the lactone moiety in the BOA molecule. The roles of the amidases an other enzymes encoded by the 2 FDB clusters have not been identified so far. The protein is Amidase FVEG_08295 of Gibberella moniliformis (strain M3125 / FGSC 7600) (Maize ear and stalk rot fungus).